Consider the following 983-residue polypeptide: UPF0182 protein MLBr00644 (983 aa).

7 consecutive transmembrane segments (helical) span residues 19 to 39 (LIMVALGVIVLLLAGPRLVDA), 63 to 83 (VVVFLVAGLVVGGIVFAGLAV), 113 to 133 (LIGVGIPAAIGLLAGIIAQSY), 175 to 195 (FVAVFLAFVVNLLAHYIFGGI), 210 to 230 (LQLVSLVGVLVLLKAVAYWLD), 259 to 279 (KLILIAIALICAAAVFSAITL), and 287 to 307 (IGLVLLMLSSLIVGTGWPLIV).

Belongs to the UPF0182 family.

It localises to the cell membrane. This Mycobacterium leprae (strain Br4923) protein is UPF0182 protein MLBr00644.